A 150-amino-acid chain; its full sequence is Lipoprotein signal peptidase (150 aa).

3 helical membrane-spanning segments follow: residues 5 to 25 (LSLV…NWVV), 59 to 79 (QQWF…WFLW), and 82 to 102 (MGQN…LGNF). Catalysis depends on residues Asp-113 and Asp-129. Residues 124 to 144 (IFNIADILLSVGFVVLFIAIL) form a helical membrane-spanning segment.

Belongs to the peptidase A8 family.

The protein localises to the cell membrane. It carries out the reaction Release of signal peptides from bacterial membrane prolipoproteins. Hydrolyzes -Xaa-Yaa-Zaa-|-(S,diacylglyceryl)Cys-, in which Xaa is hydrophobic (preferably Leu), and Yaa (Ala or Ser) and Zaa (Gly or Ala) have small, neutral side chains.. It participates in protein modification; lipoprotein biosynthesis (signal peptide cleavage). This protein specifically catalyzes the removal of signal peptides from prolipoproteins. The chain is Lipoprotein signal peptidase from Lactococcus lactis subsp. cremoris (strain SK11).